The primary structure comprises 108 residues: MNLNIETTTQDKFYEVKVGGELDVYTVPELEEVLTPMRQDGTRDIYVNLENVSYMDSTGLGLFVGTLKALNQNDKELYILGVSDRIGRLFEITGLKDLMHVNEGTEVE.

Residues Leu3–Glu108 enclose the STAS domain. Position 57 is a phosphoserine (Ser57).

It belongs to the anti-sigma-factor antagonist family. Post-translationally, phosphorylated by RsbW on a serine residue.

Positive regulator of sigma-B activity. Non-phosphorylated RsbV binds to RsbW, preventing its association with sigma-B. When phosphorylated, releases RsbW, which is then free to complex with and inactivate sigma-B. This chain is Anti-sigma-B factor antagonist (rsbV), found in Staphylococcus aureus (strain NCTC 8325 / PS 47).